We begin with the raw amino-acid sequence, 455 residues long: MATTAPPNGKWRRLFALFLPIFVSQTGQYAMNFVDVAMSGHASAEDLAGVAIGSSLWVPVFTGAGGILLALSPIVSHHFGAGRHDSITRAVAQALYLAVALAVAIVLIGAAAVPFILKQMSLDENVRHIAFHYLRALSFGIIPLFLYSVLRYFIDALGQTKVTMWITLTALPVNMLFNWLLIYGHGGFPRLGGIGTGYATAITYAYCFAAAAFAALKFRRLAPYRVLVRFYRPSWAAWKELLKTGVPIGSAIFFETSIFAAVTLLVGRFGAETVAAHQSALNFASLLYMIPLSLSMALTIAVGVEAGANRYEAAKQYCLIGITLALAVAAAAALFLSAFRSHVARLYTNDPTVAALTGKFLLYAIFFQVSDAIAAPIQGALRGYKEVNAVFWSALLAYWGVGLPLGCALALLTAAGAFGYWIGLIAGLATGALFLSFRLRAVWRRHDSGRAPCAF.

12 consecutive transmembrane segments (helical) span residues 13–31 (RLFA…QYAM), 51–73 (AIGS…ALSP), 94–116 (ALYL…VPFI), 131–150 (FHYL…YSVL), 162–184 (VTMW…LIYG), 194–216 (IGTG…FAAL), 245–267 (GVPI…LLVG), 282–304 (NFAS…AVGV), 317–339 (YCLI…LSAF), 352–369 (TVAA…FFQV), 390–412 (VFWS…LALL), and 417–439 (AFGY…SFRL).

The protein belongs to the multi antimicrobial extrusion (MATE) (TC 2.A.66.1) family.

It localises to the cell membrane. Functionally, multidrug efflux pump. In Geobacillus kaustophilus (strain HTA426), this protein is Probable multidrug resistance protein NorM (norM).